Consider the following 244-residue polypeptide: ATP synthase subunit a (244 aa).

7 consecutive transmembrane segments (helical) span residues 17 to 37, 74 to 94, 112 to 132, 148 to 168, 171 to 191, 196 to 216, and 217 to 237; these read LSNV…AVLT, PFLA…MLGL, DPAI…YYGV, IPLL…TLGL, YGNI…ATNF, IALG…WQAF, and SLFV…VYIS.

The protein belongs to the ATPase A chain family. In terms of assembly, F-type ATPases have 2 components, CF(1) - the catalytic core - and CF(0) - the membrane proton channel. CF(1) has five subunits: alpha(3), beta(3), gamma(1), delta(1), epsilon(1). CF(0) has three main subunits: a(1), b(2) and c(9-12). The alpha and beta chains form an alternating ring which encloses part of the gamma chain. CF(1) is attached to CF(0) by a central stalk formed by the gamma and epsilon chains, while a peripheral stalk is formed by the delta and b chains.

The protein resides in the cell membrane. Key component of the proton channel; it plays a direct role in the translocation of protons across the membrane. This is ATP synthase subunit a from Bacillus pumilus (strain SAFR-032).